Reading from the N-terminus, the 288-residue chain is MTFRARREVLRTILTGERCIHPGSVYDAISIRIAEDLGFELGMFGGSAASLAVLGDPDIALITLTELADQMRRMSRAATLPVLVDADHGYGNAMNVRRTVQELEAAGAAGLTIEDTLLPQAFGAAKPQLISLAEGIGKVKAALEGRGDPALVILGRTGAVSVTSLDDAIARARAYEACGVDGLFFTGITARDQLDAIAAATTLPIVLGGAPEHMSDLGYLAARRVRVALQGHAPIAAATQAVYETLKALRGGAAPKQLKGLPSAELTAQVMREAEVKRRLRVYLEPGS.

S47 contacts substrate. Residue D85 participates in Mg(2+) binding. Positions 156 and 232 each coordinate substrate.

This sequence belongs to the isocitrate lyase/PEP mutase superfamily. Oxaloacetate decarboxylase family. As to quaternary structure, homotetramer; dimer of dimers. Requires Mg(2+) as cofactor.

The catalysed reaction is oxaloacetate + H(+) = pyruvate + CO2. In terms of biological role, catalyzes the decarboxylation of oxaloacetate into pyruvate. Seems to play a role in maintaining cellular concentrations of bicarbonate and pyruvate. In Bradyrhizobium sp. (strain BTAi1 / ATCC BAA-1182), this protein is Oxaloacetate decarboxylase.